Consider the following 215-residue polypeptide: 3-isopropylmalate dehydratase small subunit (215 aa).

It belongs to the LeuD family. LeuD type 1 subfamily. Heterodimer of LeuC and LeuD.

The enzyme catalyses (2R,3S)-3-isopropylmalate = (2S)-2-isopropylmalate. The protein operates within amino-acid biosynthesis; L-leucine biosynthesis; L-leucine from 3-methyl-2-oxobutanoate: step 2/4. In terms of biological role, catalyzes the isomerization between 2-isopropylmalate and 3-isopropylmalate, via the formation of 2-isopropylmaleate. This Xylella fastidiosa (strain M12) protein is 3-isopropylmalate dehydratase small subunit.